A 335-amino-acid chain; its full sequence is DNA-directed RNA polymerase subunit alpha (335 aa).

Residues 1–233 form an alpha N-terminal domain (alpha-NTD) region; it reads MVREKIRVST…DLLIPFLHAE (233 aa). Positions 263 to 335 are alpha C-terminal domain (alpha-CTD); it reads KKKIALKFIF…HFVIDLKNKR (73 aa).

This sequence belongs to the RNA polymerase alpha chain family. In terms of assembly, in plastids the minimal PEP RNA polymerase catalytic core is composed of four subunits: alpha, beta, beta', and beta''. When a (nuclear-encoded) sigma factor is associated with the core the holoenzyme is formed, which can initiate transcription.

The protein localises to the plastid. The protein resides in the chloroplast. The catalysed reaction is RNA(n) + a ribonucleoside 5'-triphosphate = RNA(n+1) + diphosphate. Its function is as follows. DNA-dependent RNA polymerase catalyzes the transcription of DNA into RNA using the four ribonucleoside triphosphates as substrates. The polypeptide is DNA-directed RNA polymerase subunit alpha (Spinacia oleracea (Spinach)).